Here is a 170-residue protein sequence, read N- to C-terminus: uncharacterized protein (170 aa).

The next 3 membrane-spanning stretches (helical) occupy residues 6–26, 31–51, and 91–111; these read PFYFYIGMALILASIVSILLI, LLFILLAFGSLVGITLILIYI, and IYFSGTFYNSAVLFFIFIVAF.

To M.jannaschii MJ1249.1, MJ0210.1 and MJ0785.1.

The protein localises to the cell membrane. This is an uncharacterized protein from Methanocaldococcus jannaschii (strain ATCC 43067 / DSM 2661 / JAL-1 / JCM 10045 / NBRC 100440) (Methanococcus jannaschii).